Reading from the N-terminus, the 52-residue chain is MIKIQLESSNQSVLKLEERRLNLTAEIERIYGQMDLKRKELENANLRLHVFN.

Residues 3–46 (KIQLESSNQSVLKLEERRLNLTAEIERIYGQMDLKRKELENANL) adopt a coiled-coil conformation.

This is an uncharacterized protein from Dictyostelium discoideum (Social amoeba).